We begin with the raw amino-acid sequence, 546 residues long: Putative serine hydroxymethyltransferase, mitochondrial (546 aa).

The N-terminal 64 residues, 1-64, are a transit peptide targeting the mitochondrion; it reads MSSFQSTAAV…RFSSSSIAND (64 aa). Lys-305 bears the N6-(pyridoxal phosphate)lysine mark.

The protein belongs to the SHMT family. As to quaternary structure, homotetramer. The cofactor is pyridoxal 5'-phosphate.

It localises to the mitochondrion. It catalyses the reaction (6R)-5,10-methylene-5,6,7,8-tetrahydrofolate + glycine + H2O = (6S)-5,6,7,8-tetrahydrofolate + L-serine. The protein operates within one-carbon metabolism; tetrahydrofolate interconversion. Interconversion of serine and glycine. The chain is Putative serine hydroxymethyltransferase, mitochondrial (cbs-2) from Neurospora crassa (strain ATCC 24698 / 74-OR23-1A / CBS 708.71 / DSM 1257 / FGSC 987).